Reading from the N-terminus, the 278-residue chain is Orotidine 5'-phosphate decarboxylase (278 aa).

Lysine 96 (proton donor) is an active-site residue.

This sequence belongs to the OMP decarboxylase family. Type 2 subfamily.

The enzyme catalyses orotidine 5'-phosphate + H(+) = UMP + CO2. The protein operates within pyrimidine metabolism; UMP biosynthesis via de novo pathway; UMP from orotate: step 2/2. The sequence is that of Orotidine 5'-phosphate decarboxylase (pyrF) from Streptomyces coelicolor (strain ATCC BAA-471 / A3(2) / M145).